The primary structure comprises 518 residues: ATP synthase subunit alpha (518 aa).

169–176 lines the ATP pocket; it reads GDRKTGKT.

Belongs to the ATPase alpha/beta chains family. In terms of assembly, F-type ATPases have 2 components, CF(1) - the catalytic core - and CF(0) - the membrane proton channel. CF(1) has five subunits: alpha(3), beta(3), gamma(1), delta(1), epsilon(1). CF(0) has three main subunits: a(1), b(2) and c(9-12). The alpha and beta chains form an alternating ring which encloses part of the gamma chain. CF(1) is attached to CF(0) by a central stalk formed by the gamma and epsilon chains, while a peripheral stalk is formed by the delta and b chains.

The protein localises to the cell membrane. The enzyme catalyses ATP + H2O + 4 H(+)(in) = ADP + phosphate + 5 H(+)(out). Functionally, produces ATP from ADP in the presence of a proton gradient across the membrane. The alpha chain is a regulatory subunit. The protein is ATP synthase subunit alpha of Enterococcus hirae (strain ATCC 9790 / DSM 20160 / JCM 8729 / LMG 6399 / NBRC 3181 / NCIMB 6459 / NCDO 1258 / NCTC 12367 / WDCM 00089 / R).